Reading from the N-terminus, the 391-residue chain is Processive diacylglycerol beta-glucosyltransferase (391 aa).

This sequence belongs to the glycosyltransferase 28 family. UgtP subfamily.

The protein resides in the cell membrane. It carries out the reaction a 1,2-diacyl-3-O-(beta-D-glucopyranosyl)-sn-glycerol + UDP-alpha-D-glucose = a 1,2-diacyl-3-O-(beta-D-Glc-(1-&gt;6)-beta-D-Glc)-sn-glycerol + UDP + H(+). It catalyses the reaction a 1,2-diacyl-sn-glycerol + UDP-alpha-D-glucose = a 1,2-diacyl-3-O-(beta-D-glucopyranosyl)-sn-glycerol + UDP + H(+). It functions in the pathway glycolipid metabolism; diglucosyl-diacylglycerol biosynthesis. Its function is as follows. Processive glucosyltransferase involved in the biosynthesis of both the bilayer- and non-bilayer-forming membrane glucolipids. Is able to successively transfer two glucosyl residues to diacylglycerol (DAG), thereby catalyzing the formation of beta-monoglucosyl-DAG (3-O-(beta-D-glucopyranosyl)-1,2-diacyl-sn-glycerol) and beta-diglucosyl-DAG (3-O-(beta-D-glucopyranosyl-beta-(1-&gt;6)-D-glucopyranosyl)-1,2-diacyl-sn-glycerol). Beta-diglucosyl-DAG is the predominant glycolipid found in Bacillales and is also used as a membrane anchor for lipoteichoic acid (LTA). In Staphylococcus aureus (strain Mu3 / ATCC 700698), this protein is Processive diacylglycerol beta-glucosyltransferase.